Consider the following 236-residue polypeptide: Factor V activator RVV-V alpha (236 aa).

The Peptidase S1 domain maps to Val-1–Ala-227. Intrachain disulfides connect Cys-7-Cys-141, Cys-28-Cys-44, Cys-76-Cys-234, Cys-120-Cys-188, Cys-152-Cys-167, and Cys-178-Cys-203. Active-site charge relay system residues include His-43 and Asp-88. The active-site Charge relay system is the Ser-182. N-linked (GlcNAc...) asparagine glycosylation is present at Asn-229.

Belongs to the peptidase S1 family. Snake venom subfamily. As to quaternary structure, monomer. As to expression, expressed by the venom gland.

The protein resides in the secreted. It catalyses the reaction Fully activates human clotting factor V by a single cleavage at the 1545-Trp-Tyr-Leu-Arg-|-Ser-Asn-Asn-Gly-1552 bond. Cattle, but not rabbit, factor V is cleaved, and no other proteins of the clotting system are attacked. Esterase activity is observed on Bz-Arg-OEt and Tos-Arg-OMe, and amidase activity on Phe-pipecolyl-Arg-NHPhNO2.. With respect to regulation, inhibited by D-Phe-Pro-Arg-chloromethyl ketone (FPRCK) (97%), PMSF (76%), and benzamidine (50%). Is not inhibited by BPTI, antithrombin and EDTA. In terms of biological role, venom serine protease that activates factor V (F5) in a calcium-independent manner. It cleaves the Arg(1545)-Ser(1546) linkage in the human factor V molecule. Induces the coagulation of mammalian plasma. This Daboia siamensis (Eastern Russel's viper) protein is Factor V activator RVV-V alpha.